The sequence spans 131 residues: Small ribosomal subunit protein uS9 (131 aa).

Belongs to the universal ribosomal protein uS9 family.

The chain is Small ribosomal subunit protein uS9 from Haemophilus ducreyi (strain 35000HP / ATCC 700724).